The chain runs to 217 residues: Adenylate kinase (217 aa).

11-16 (GSGKGT) is a binding site for ATP. The tract at residues 31–61 (STGTMLRQALTRSTHKSYELHKNIMHTGDLV) is NMP. Residues T32, R37, 59–61 (DLV), 87–90 (GFPR), and Q94 each bind AMP. The segment at 124-161 (GRRIHVGSGRTYHIKFNPPRNYGLDDITGEILTTRKDD) is LID. Residues R125 and 134-135 (TY) each bind ATP. Residues R158 and R169 each contribute to the AMP site. R202 lines the ATP pocket.

The protein belongs to the adenylate kinase family. As to quaternary structure, monomer.

It is found in the cytoplasm. The enzyme catalyses AMP + ATP = 2 ADP. It functions in the pathway purine metabolism; AMP biosynthesis via salvage pathway; AMP from ADP: step 1/1. Functionally, catalyzes the reversible transfer of the terminal phosphate group between ATP and AMP. Plays an important role in cellular energy homeostasis and in adenine nucleotide metabolism. The polypeptide is Adenylate kinase (Blochmanniella pennsylvanica (strain BPEN)).